The primary structure comprises 111 residues: uncharacterized protein (111 aa).

3 helical membrane-spanning segments follow: residues 4 to 22 (FWILMLIAITISLASQFFI), 49 to 71 (LLILFVFSLSFFPVEYLLLLFFI), and 91 to 108 (YMYHIVEVSLMFMLLIYV).

It localises to the cell membrane. This is an uncharacterized protein from Bacillus subtilis (strain 168).